A 1037-amino-acid polypeptide reads, in one-letter code: Serine/threonine-protein kinase ULK2 (1037 aa).

The region spanning Tyr-9–Leu-271 is the Protein kinase domain. ATP is bound by residues Val-15 to Val-23 and Lys-39. The active-site Proton acceptor is Asp-131. The disordered stretch occupies residues Glu-319 to Thr-350. Residues Ser-335 to Cys-348 show a composition bias toward low complexity. The residue at position 430 (Ser-430) is a Phosphoserine. 4 disordered regions span residues Cys-452 to Leu-480, Gly-494 to Gln-515, Gln-540 to Leu-594, and His-626 to Arg-697. 2 stretches are compositionally biased toward polar residues: residues Ser-506 to Gln-515 and Leu-571 to Asn-585. The segment covering Gln-632–Ser-643 has biased composition (basic and acidic residues). Residues Gln-658 to Gln-678 are compositionally biased toward polar residues. Phosphoserine is present on residues Ser-772 and Ser-781. The tract at residues Glu-813–Val-1037 is CTD-like region.

This sequence belongs to the protein kinase superfamily. Ser/Thr protein kinase family. APG1/unc-51/ULK1 subfamily. Component of a complex consisting of ATG13/KIAA0652, ULK1 and RB1CC1/FIP200. Interacts (via C-terminus) with ATG13/KIAA0652. Associates with the mammalian target of rapamycin complex 1 (mTORC1) through an interaction with RPTOR. Interacts with SYNGAP1. Post-translationally, autophosphorylated. In response to nutrient limitation, probably phosphorylated and activated by AMPK, leading to activate autophagy. Widely expressed.

The protein resides in the cytoplasmic vesicle membrane. It catalyses the reaction L-seryl-[protein] + ATP = O-phospho-L-seryl-[protein] + ADP + H(+). The enzyme catalyses L-threonyl-[protein] + ATP = O-phospho-L-threonyl-[protein] + ADP + H(+). Serine/threonine-protein kinase involved in autophagy in response to starvation. Acts upstream of phosphatidylinositol 3-kinase PIK3C3 to regulate the formation of autophagophores, the precursors of autophagosomes. Part of regulatory feedback loops in autophagy: acts both as a downstream effector and a negative regulator of mammalian target of rapamycin complex 1 (mTORC1) via interaction with RPTOR. Activated via phosphorylation by AMPK, also acts as a negative regulator of AMPK through phosphorylation of the AMPK subunits PRKAA1, PRKAB2 and PRKAG1. May phosphorylate ATG13/KIAA0652, FRS2, FRS3 and RPTOR; however such data need additional evidences. Not involved in ammonia-induced autophagy or in autophagic response of cerebellar granule neurons (CGN) to low potassium concentration. Plays a role early in neuronal differentiation and is required for granule cell axon formation: may govern axon formation via Ras-like GTPase signaling and through regulation of the Rab5-mediated endocytic pathways within developing axons. The polypeptide is Serine/threonine-protein kinase ULK2 (Ulk2) (Mus musculus (Mouse)).